We begin with the raw amino-acid sequence, 219 residues long: Cyclin-U4-3 (219 aa).

Belongs to the cyclin family. Cyclin U/P subfamily. Interacts with CDKA-1. In terms of tissue distribution, expressed at low levels in roots, stems and flowers. Expressed in the shoot apex, leaf primordia and young leaves.

This chain is Cyclin-U4-3 (CYCU4-3), found in Arabidopsis thaliana (Mouse-ear cress).